A 100-amino-acid chain; its full sequence is MQLTPHEQERLLIHVAADVAEKRRARGLRLNHPEAVALITSHLLEGARDGRTVAELMVSGRTLLTRDDVMEGIPEMLHDVQVEATFPDGTKLVTVHDPIV.

This sequence belongs to the urease gamma subunit family. Heterotrimer of UreA (gamma), UreB (beta) and UreC (alpha) subunits. Three heterotrimers associate to form the active enzyme.

The protein localises to the cytoplasm. It carries out the reaction urea + 2 H2O + H(+) = hydrogencarbonate + 2 NH4(+). The protein operates within nitrogen metabolism; urea degradation; CO(2) and NH(3) from urea (urease route): step 1/1. This is Urease subunit gamma from Streptomyces griseus subsp. griseus (strain JCM 4626 / CBS 651.72 / NBRC 13350 / KCC S-0626 / ISP 5235).